The following is a 549-amino-acid chain: Cell death protein 4 (549 aa).

Residues 1–91 (MLCEIECRAL…HLADFLEDYI (91 aa)) form the CARD domain. 9 residues coordinate ATP: Tyr-131, Gly-162, Gly-164, Lys-165, Ser-166, Val-167, Arg-273, Thr-367, and Tyr-369. Residues 133 to 417 (REYHVDRVIK…KLWSCVIPVD (285 aa)) enclose the NB-ARC domain. Ser-166 contacts Mg(2+).

As to quaternary structure, associates as an asymmetric homodimer with ced-9. Only one ced-4 molecule within the dimer interacts directly with ced-9. Upon release from ced-9, forms a multimer, known as the apoptosome, and interacts with ced-3; the interaction results in ced-3 autoproteolytic cleavage and activation. Multiple oligomeric states of the apoptosome are observed including hexamers, heptamers and octamers. The hexamers likely represent a pre-mature state of the apoptosome and may contribute to the regulation of ced-3 activation. The apoptosome multimer also interacts with two processed ced-3 to form a stable holoenzyme. Interacts with sex-determining protein fem-1. May form a complex composed of ced-3, ced-4 and mac-1 or of ced-9, ced-4 and mac-1. Within the complex, interacts with mac-1.

It is found in the mitochondrion. It localises to the cytoplasm. Its subcellular location is the perinuclear region. In terms of biological role, component of the egl-1, ced-9, ced-4 and ced-3 apoptotic signaling cascade required for the initiation of programmed cell death in cells fated to die during embryonic and postembryonic development. During oogenesis, required for germline apoptosis downstream of ced-9 and upstream of ced-3 but independently of egl-1. May regulate germline apoptosis in response to DNA damage, probably downstream of let-60/ras and mpk-1 pathway. Regulates CEP neuron apoptosis in response to high Al(3+) levels. During male tail morphogenesis, promotes apoptosis of the tail-spike cell upstream of ced-3 but independently of egl-1 and ced-9. May play a role in sex-specific cell apoptosis, probably by promoting ced-3-mediated cleavage of sex-determining protein fem-1. During larval development, required for the elimination of transient presynaptic components downstream of egl-1 and ced-9 and upstream of ced-3 apoptotic pathway. Downstream of calreticulin crt-1 and upstream of ced-3 and independently of egl-1 and ced-9, plays a role in the initial steps of axonal regrowth following axotomy. Together with ain-1, a component of the miRNA-induced-silencing complex (miRISC), and probably upstream of ced-3, regulates temporal cell fate patterning during larval development. May play a role in resistance to S.typhimurium-mediated infection. Its function is as follows. Plays a major role in programmed cell death. egl-1 binds to and directly inhibits the activity of ced-9, releasing the cell death activator ced-4 from a ced-9/ced-4-containing protein complex and allowing ced-4 to induce caspase ced-3 autoproteolytic cleavage and activation. Also forms a holoenzyme with processed ced-3 enhancing ced-3 activity. Functionally, prevents programmed cell death. The chain is Cell death protein 4 (ced-4) from Caenorhabditis elegans.